Here is a 615-residue protein sequence, read N- to C-terminus: NEDD8 ultimate buster 1 (615 aa).

Coiled-coil stretches lie at residues Leu36–Arg70 and Lys152–Thr203. UBA domains lie at Tyr374 to Asn413, Glu424 to Asn470, and Ser489 to Asn529. Positions Arg414–Arg431 match the Nuclear localization signal motif. The tract at residues Glu427 to Trp474 is NEDD8-binding 1. The segment at Ser532–Tyr586 is disordered. The span at Leu539 to Ser562 shows a compositional bias: low complexity. The tract at residues Thr550–Ile598 is NEDD8-binding 2. A compositionally biased stretch (acidic residues) spans Thr563–Tyr586.

As to quaternary structure, directly interacts with NEDD8 and PSMD4/S5a, a member of the regulatory subunit of the 26S proteasome. Isoform 1 binds to NEDD8 more efficiently than isoform 2. Interacts with AIPL1. The interaction with UBD via UBA domains facilitates the linking of UBD-conjugated target protein to the proteasome complex and accelerates UBD degradation and that of its conjugates. In terms of tissue distribution, widely expressed with lowest expression in the pancreas for isoform 1 and in leukocytes, liver, prostate and skeletal muscle for isoform 2.

The protein localises to the nucleus. Specific down-regulator of the NEDD8 conjugation system. Recruits NEDD8, UBD, and their conjugates to the proteasome for degradation. Isoform 1 promotes the degradation of NEDD8 more efficiently than isoform 2. In Homo sapiens (Human), this protein is NEDD8 ultimate buster 1 (NUB1).